A 146-amino-acid polypeptide reads, in one-letter code: MORN repeat-containing protein 4 (146 aa).

MORN repeat units lie at residues tyrosine 16–threonine 38, tyrosine 39–arginine 61, tyrosine 62–threonine 84, and phenylalanine 85–histidine 107.

As to quaternary structure, interacts with MYO3A.

It is found in the cytoplasm. The protein localises to the cell projection. The protein resides in the filopodium tip. It localises to the stereocilium. In terms of biological role, plays a role in promoting axonal degeneration following neuronal injury by toxic insult or trauma. This chain is MORN repeat-containing protein 4 (Morn4), found in Rattus norvegicus (Rat).